Here is a 227-residue protein sequence, read N- to C-terminus: MFITLEGIEGSGKTTQIKPLVDCLGQNGYEAVVTREPGATVIGKKIRAILLDPGNSGMSDLCELFLYGADRAQHLSEVIIPALGAGKTVVCDRFTDATTVYQGAARGISKELIDIIHSVVVKDLCPDLTILFDLDPETGLARTVKALTDGERTLDESRFERETLEFHERVRQGYLALAAAEQDRFLVVDARGTQEQVFTEIVSGINRRLGIDLVGIDSAMIDPRVKG.

7–14 (GIEGSGKT) is an ATP binding site.

Belongs to the thymidylate kinase family.

It carries out the reaction dTMP + ATP = dTDP + ADP. Functionally, phosphorylation of dTMP to form dTDP in both de novo and salvage pathways of dTTP synthesis. This chain is Thymidylate kinase, found in Desulforapulum autotrophicum (strain ATCC 43914 / DSM 3382 / VKM B-1955 / HRM2) (Desulfobacterium autotrophicum).